Here is a 173-residue protein sequence, read N- to C-terminus: Photosystem I assembly protein Ycf3 (173 aa).

TPR repeat units follow at residues 35-68, 72-105, and 120-153; these read AFVYYRDGMSAQADGEYKEALDNYYEALKLEDDA, SYILYNIGIIHGSNGEHERALEYYHEAIELNPNL, and GERAKEEGREDESEALFDKAAEYWKQAIRLAPNN.

Belongs to the Ycf3 family.

It localises to the cellular thylakoid membrane. In terms of biological role, essential for the assembly of the photosystem I (PSI) complex. May act as a chaperone-like factor to guide the assembly of the PSI subunits. This is Photosystem I assembly protein Ycf3 from Gloeothece citriformis (strain PCC 7424) (Cyanothece sp. (strain PCC 7424)).